The sequence spans 65 residues: Large ribosomal subunit protein bL35 (65 aa).

The interval 1-21 (MPKMKTKSGAAKRFTVRAGGT) is disordered.

This sequence belongs to the bacterial ribosomal protein bL35 family.

In Nitrosospira multiformis (strain ATCC 25196 / NCIMB 11849 / C 71), this protein is Large ribosomal subunit protein bL35.